Here is a 483-residue protein sequence, read N- to C-terminus: Bifunctional pantoate ligase/cytidylate kinase (483 aa).

The tract at residues 1–246 (MPTMGALHAG…CGSTRLIDHA (246 aa)) is pantoate--beta-alanine ligase. 4-11 (MGALHAGH) is an ATP binding site. Histidine 11 (proton donor) is an active-site residue. Glutamine 34 lines the (R)-pantoate pocket. Glutamine 34 serves as a coordination point for beta-alanine. 124–127 (GEKD) provides a ligand contact to ATP. Glutamine 130 contacts (R)-pantoate. Residues valine 153 and 161–164 (LSSR) each bind ATP. The tract at residues 247 to 483 (FLMTRQPLVA…AEEAWPTPQR (237 aa)) is cytidylate kinase.

In the N-terminal section; belongs to the pantothenate synthetase family. This sequence in the C-terminal section; belongs to the cytidylate kinase family. Type 1 subfamily.

Its subcellular location is the cytoplasm. The catalysed reaction is (R)-pantoate + beta-alanine + ATP = (R)-pantothenate + AMP + diphosphate + H(+). The enzyme catalyses CMP + ATP = CDP + ADP. It catalyses the reaction dCMP + ATP = dCDP + ADP. It functions in the pathway cofactor biosynthesis; (R)-pantothenate biosynthesis; (R)-pantothenate from (R)-pantoate and beta-alanine: step 1/1. Catalyzes the condensation of pantoate with beta-alanine in an ATP-dependent reaction via a pantoyl-adenylate intermediate. Functionally, catalyzes the transfer of a phosphate group from ATP to either CMP or dCMP to form CDP or dCDP and ADP, respectively. The polypeptide is Bifunctional pantoate ligase/cytidylate kinase (Synechococcus sp. (strain CC9902)).